We begin with the raw amino-acid sequence, 208 residues long: GTP-binding protein YPTM1 (208 aa).

GTP is bound by residues 15–23 (GDSSVGKSC), 33–40 (YVDSYIST), 63–67 (DTAGQ), 121–124 (NKCD), and 151–153 (SAK). The Effector region motif lies at 37–45 (YISTIGVDF). The tract at residues 189–208 (QMKGRPIQQEQQKSSRCCST) is disordered. A compositionally biased stretch (polar residues) spans 196-208 (QQEQQKSSRCCST). 2 S-geranylgeranyl cysteine lipidation sites follow: cysteine 205 and cysteine 206.

The protein belongs to the small GTPase superfamily. Rab family. As to expression, low levels in coleoptiles.

The protein localises to the cell membrane. Protein transport. Probably involved in vesicular traffic. The sequence is that of GTP-binding protein YPTM1 (YPTM1) from Zea mays (Maize).